We begin with the raw amino-acid sequence, 224 residues long: Serum amyloid P-component (224 aa).

A signal peptide spans 1–20 (MDKLLLWMFVFTSLLSEAFC). The Pentraxin (PTX) domain maps to 25-224 (KRKVFVFPRE…YVVIRPRVWD (200 aa)). Asparagine 52 carries an N-linked (GlcNAc...) asparagine glycan. A disulfide bridge connects residues cysteine 56 and cysteine 115. Residues aspartate 78, asparagine 79, glutamate 156, glutamine 157, aspartate 158, and glutamine 168 each contribute to the Ca(2+) site.

Belongs to the pentraxin family. Homopentamer. Pentraxin (or pentaxin) have a discoid arrangement of 5 non-covalently bound subunits. Ca(2+) is required as a cofactor.

Its subcellular location is the secreted. This is Serum amyloid P-component (Apcs) from Mus musculus (Mouse).